The chain runs to 519 residues: Protein nucleotidyltransferase YdiU (519 aa).

Residues glycine 101, glycine 103, arginine 104, lysine 123, aspartate 135, glycine 136, arginine 193, and arginine 200 each contribute to the ATP site. Aspartate 271 (proton acceptor) is an active-site residue. Mg(2+)-binding residues include asparagine 272 and aspartate 281. An ATP-binding site is contributed by aspartate 281.

It belongs to the SELO family. Mg(2+) is required as a cofactor. Mn(2+) serves as cofactor.

It catalyses the reaction L-seryl-[protein] + ATP = 3-O-(5'-adenylyl)-L-seryl-[protein] + diphosphate. The catalysed reaction is L-threonyl-[protein] + ATP = 3-O-(5'-adenylyl)-L-threonyl-[protein] + diphosphate. The enzyme catalyses L-tyrosyl-[protein] + ATP = O-(5'-adenylyl)-L-tyrosyl-[protein] + diphosphate. It carries out the reaction L-histidyl-[protein] + UTP = N(tele)-(5'-uridylyl)-L-histidyl-[protein] + diphosphate. It catalyses the reaction L-seryl-[protein] + UTP = O-(5'-uridylyl)-L-seryl-[protein] + diphosphate. The catalysed reaction is L-tyrosyl-[protein] + UTP = O-(5'-uridylyl)-L-tyrosyl-[protein] + diphosphate. Nucleotidyltransferase involved in the post-translational modification of proteins. It can catalyze the addition of adenosine monophosphate (AMP) or uridine monophosphate (UMP) to a protein, resulting in modifications known as AMPylation and UMPylation. In Tolumonas auensis (strain DSM 9187 / NBRC 110442 / TA 4), this protein is Protein nucleotidyltransferase YdiU.